The chain runs to 232 residues: Very-long-chain (3R)-3-hydroxyacyl-CoA dehydratase 4 (232 aa).

Topologically, residues 1–19 (MGPLALPAWLQPRYRKNAY) are cytoplasmic. The helical transmembrane segment at 20 to 40 (LFIYYLIQFCGHSWIFTNMTV) threads the bilayer. At 41-56 (RFFSFGKDSMVDTFYA) the chain is on the lumenal side. A helical membrane pass occupies residues 57 to 77 (IGLVMRLCQSVSLLELLHIYV). Topologically, residues 78 to 112 (GIESNHLLPRFLQLTERIIILFVVITSQEEVQEKY) are cytoplasmic. A helical transmembrane segment spans residues 113–133 (VVCVLFVFWNLLDMVRYTYSM). The Lumenal portion of the chain corresponds to 134-135 (LS). Residues 136-156 (VIGISYAVLTWLSQTLWMPIY) traverse the membrane as a helical segment. The active site involves Y156. Position 157 (P157) is a topological domain, cytoplasmic. Residues 158–178 (LCVLAEAFAIYQSLPYFESFG) traverse the membrane as a helical segment. The active site involves E163. Over 179–189 (TYSTKLPFDLS) the chain is Lumenal. Residues 190 to 210 (IYFPYVLKIYLMMLFIGMYFT) traverse the membrane as a helical segment. Residues 211–232 (YSHLYSERRDILGIFPIKKKKM) lie on the Cytoplasmic side of the membrane.

The protein belongs to the very long-chain fatty acids dehydratase HACD family. May interact with enzymes of the ELO family (including ELOVL1); with those enzymes that mediate condensation, the first of the four steps of the reaction cycle responsible for fatty acids elongation, may be part of a larger fatty acids elongase complex. In terms of tissue distribution, highly expressed in leukocytes, and low expression in heart, spleen, kidney, and placenta.

It localises to the endoplasmic reticulum membrane. The catalysed reaction is a very-long-chain (3R)-3-hydroxyacyl-CoA = a very-long-chain (2E)-enoyl-CoA + H2O. The enzyme catalyses (3R)-hydroxyhexadecanoyl-CoA = (2E)-hexadecenoyl-CoA + H2O. Its pathway is lipid metabolism; fatty acid biosynthesis. Catalyzes the third of the four reactions of the long-chain fatty acids elongation cycle. This endoplasmic reticulum-bound enzymatic process, allows the addition of two carbons to the chain of long- and very long-chain fatty acids/VLCFAs per cycle. This enzyme catalyzes the dehydration of the 3-hydroxyacyl-CoA intermediate into trans-2,3-enoyl-CoA, within each cycle of fatty acid elongation. Thereby, it participates in the production of VLCFAs of different chain lengths that are involved in multiple biological processes as precursors of membrane lipids and lipid mediators. The sequence is that of Very-long-chain (3R)-3-hydroxyacyl-CoA dehydratase 4 from Homo sapiens (Human).